The sequence spans 526 residues: Methyltetrahydroprotoberberine 14-monooxygenase (526 aa).

A helical transmembrane segment spans residues 14–34 (LLLQYLQPISVALVVIALVWN). Residue C468 participates in heme binding.

The protein belongs to the cytochrome P450 family. Heme serves as cofactor. In terms of tissue distribution, mainly expressed in roots, and barely in stems, leaves and carpels.

Its subcellular location is the membrane. It catalyses the reaction (S)-cis-N-methylcanadine + reduced [NADPH--hemoprotein reductase] + O2 = allocryptopine + oxidized [NADPH--hemoprotein reductase] + H2O + 2 H(+). The enzyme catalyses (S)-cis-N-methylstylopine + reduced [NADPH--hemoprotein reductase] + O2 = protopine + oxidized [NADPH--hemoprotein reductase] + H2O + 2 H(+). It carries out the reaction (S)-cis-N-methyltetrahydrothalifendine + reduced [NADPH--hemoprotein reductase] + O2 = 7-hydroxy-8-methoxy-11-methyl-17,19-dioxa-11-azatetracyclo[12.7.0.0(4,9).0(16,20)]henicosa-1(21),4(9),5,7,14,16(20)-hexaen-2-one + oxidized [NADPH--hemoprotein reductase] + H2O + 2 H(+). The catalysed reaction is (S)-cis-N-methyltetrahydropalmatine + reduced [NADPH--hemoprotein reductase] + O2 = muramine + oxidized [NADPH--hemoprotein reductase] + H2O + 2 H(+). It functions in the pathway alkaloid biosynthesis. Its activity is regulated as follows. Repressed by cytochrome P450 inhibitors ketoconazole, metyrapone, prochloraz, ancymidol and cytochrome C. Involved in the biosynthesis of the isoquinoline alkaloid sanguinarine. Catalyzes the conversion of N-methylated protoberberine alkaloids N-methylstylopine and N-methylcanadine into protopine and allocryptopine, respectively. Can also use (S)-cis-N-methyltetrahydrothalifendine and (S)-cis-N-methyltetrahydropalmatine as substrates. The sequence is that of Methyltetrahydroprotoberberine 14-monooxygenase from Papaver somniferum (Opium poppy).